Consider the following 736-residue polypeptide: Polyphosphate kinase (736 aa).

N91 lines the ATP pocket. Mg(2+)-binding residues include R421 and R451. The Phosphohistidine intermediate role is filled by H481. Residues Y514, R610, and H638 each contribute to the ATP site.

The protein belongs to the polyphosphate kinase 1 (PPK1) family. Requires Mg(2+) as cofactor. Post-translationally, an intermediate of this reaction is the autophosphorylated ppk in which a phosphate is covalently linked to a histidine residue through a N-P bond.

The enzyme catalyses [phosphate](n) + ATP = [phosphate](n+1) + ADP. Functionally, catalyzes the reversible transfer of the terminal phosphate of ATP to form a long-chain polyphosphate (polyP). The chain is Polyphosphate kinase from Pseudomonas syringae pv. tomato (strain ATCC BAA-871 / DC3000).